Reading from the N-terminus, the 217-residue chain is Thymidylate kinase (217 aa).

7–14 (GIEGTGKT) is an ATP binding site.

This sequence belongs to the thymidylate kinase family.

The catalysed reaction is dTMP + ATP = dTDP + ADP. Phosphorylation of dTMP to form dTDP in both de novo and salvage pathways of dTTP synthesis. The chain is Thymidylate kinase from Maridesulfovibrio salexigens (strain ATCC 14822 / DSM 2638 / NCIMB 8403 / VKM B-1763) (Desulfovibrio salexigens).